The chain runs to 382 residues: Heme A synthase (382 aa).

The next 8 helical transmembrane spans lie at glycine 25–glycine 45, leucine 112–glycine 132, leucine 138–isoleucine 158, leucine 176–glycine 196, valine 211–alanine 231, leucine 270–alanine 290, alanine 303–isoleucine 323, and leucine 327–isoleucine 347. Histidine 277 is a binding site for heme. Histidine 338 contributes to the heme binding site.

It belongs to the COX15/CtaA family. Type 2 subfamily. As to quaternary structure, interacts with CtaB. Requires heme b as cofactor.

Its subcellular location is the cell membrane. It catalyses the reaction Fe(II)-heme o + 2 A + H2O = Fe(II)-heme a + 2 AH2. Its pathway is porphyrin-containing compound metabolism; heme A biosynthesis; heme A from heme O: step 1/1. Catalyzes the conversion of heme O to heme A by two successive hydroxylations of the methyl group at C8. The first hydroxylation forms heme I, the second hydroxylation results in an unstable dihydroxymethyl group, which spontaneously dehydrates, resulting in the formyl group of heme A. The polypeptide is Heme A synthase (Methylorubrum extorquens (strain PA1) (Methylobacterium extorquens)).